Here is a 734-residue protein sequence, read N- to C-terminus: 1,4-alpha-glucan branching enzyme GlgB (734 aa).

Residue Asp-414 is the Nucleophile of the active site. Residue Glu-467 is the Proton donor of the active site.

It belongs to the glycosyl hydrolase 13 family. GlgB subfamily. Monomer.

It carries out the reaction Transfers a segment of a (1-&gt;4)-alpha-D-glucan chain to a primary hydroxy group in a similar glucan chain.. It functions in the pathway glycan biosynthesis; glycogen biosynthesis. Functionally, catalyzes the formation of the alpha-1,6-glucosidic linkages in glycogen by scission of a 1,4-alpha-linked oligosaccharide from growing alpha-1,4-glucan chains and the subsequent attachment of the oligosaccharide to the alpha-1,6 position. This chain is 1,4-alpha-glucan branching enzyme GlgB, found in Myxococcus xanthus (strain DK1622).